Here is a 180-residue protein sequence, read N- to C-terminus: Mitochondrial membrane protein FMP33 (180 aa).

3 helical membrane passes run 34–54 (LYTS…LYLE), 121–141 (FSIV…STLG), and 145–165 (ILYK…YMAL).

Its subcellular location is the mitochondrion membrane. This Saccharomyces cerevisiae (strain ATCC 204508 / S288c) (Baker's yeast) protein is Mitochondrial membrane protein FMP33 (FMP33).